We begin with the raw amino-acid sequence, 186 residues long: Translation initiation factor IF-3 (186 aa).

Belongs to the IF-3 family. Monomer.

The protein resides in the cytoplasm. IF-3 binds to the 30S ribosomal subunit and shifts the equilibrium between 70S ribosomes and their 50S and 30S subunits in favor of the free subunits, thus enhancing the availability of 30S subunits on which protein synthesis initiation begins. The protein is Translation initiation factor IF-3 of Chlamydia caviae (strain ATCC VR-813 / DSM 19441 / 03DC25 / GPIC) (Chlamydophila caviae).